Consider the following 290-residue polypeptide: UBX domain-containing protein 1-B (290 aa).

A UBA domain is found at 1–42 (MADCSALESLIEMGFSPSRAEKALSATGNQGIEPAMDWLVEH). Positions 49-210 (KEPSVVIPED…VQEPPTKKEY (162 aa)) are disordered. 2 stretches are compositionally biased toward basic and acidic residues: residues 80 to 117 (PLTE…EQEK) and 132 to 172 (RMQE…DRAR). The stretch at 81-171 (LTEEEKEKQT…KIARDKADRA (91 aa)) forms a coiled coil. Over residues 185-201 (PAETSVPATAPSPSSPV) the composition is skewed to low complexity. Residues 208–287 (KEYDQCRIQV…GLVPTAVLIV (80 aa)) enclose the UBX domain.

It localises to the cytoplasm. Its function is as follows. Component of a complex required to couple deglycosylation and proteasome-mediated degradation of misfolded proteins in the endoplasmic reticulum that are retrotranslocated in the cytosol. Involved in ubiquitin-proteasome systems. This Xenopus laevis (African clawed frog) protein is UBX domain-containing protein 1-B (ubxn1-b).